The sequence spans 315 residues: MTGQGQSASGSSAWSTVFRHVRYENLIAGVSGGVLSNLALHPLDLVKIRFAVSDGLELRPKYNGILHCLTTIWKLDGLRGLYQGVTPNIWGAGLSWGLYFFFYNAIKSYKTEGRAERLEATEYLVSAAEAGAMTLCITNPLWVTKTRLMLQYDAVVNSPHRQYKGMFDTLVKIYKYEGVRGLYKGFVPGLFGTSHGALQFMAYELLKLKYNQHINRLPEAQLSTVEYISVAALSKIFAVAATYPYQVVRARLQDQHMFYSGVIDVITKTWRKEGVGGFYKGIAPNLIRVTPACCITFVVYENVSHFLLDLREKRK.

3 Solcar repeats span residues 20–109, 118–209, and 222–306; these read HVRY…IKSY, LEAT…LKLK, and LSTV…VSHF. 6 consecutive transmembrane segments (helical) span residues 26–43, 89–106, 123–143, 186–203, 227–243, and 281–300; these read LIAG…LHPL, IWGA…YNAI, YLVS…PLWV, FVPG…FMAY, YISV…AATY, and GIAP…FVVY.

Belongs to the mitochondrial carrier (TC 2.A.29) family. As to expression, ubiquitous.

Its subcellular location is the mitochondrion inner membrane. The catalysed reaction is FAD(in) = FAD(out). Functionally, facilitates flavin adenine dinucleotide (FAD) translocation across the mitochondrial inner membrane into the mitochondrial matrix where it acts as a redox cofactor to assist flavoenzyme activities in fundamental metabolic processes including fatty acid beta-oxidation, amino acid and choline metabolism as well as mitochondrial electron transportation. In particular, provides FAD to DLD dehydrogenase of the glycine cleavage system, part of mitochondrial one-carbon metabolic pathway involved in neural tube closure in early embryogenesis. This Homo sapiens (Human) protein is Solute carrier family 25 member 32.